A 75-amino-acid polypeptide reads, in one-letter code: Small ribosomal subunit protein bS18 (75 aa).

This sequence belongs to the bacterial ribosomal protein bS18 family. In terms of assembly, part of the 30S ribosomal subunit. Forms a tight heterodimer with protein bS6.

Binds as a heterodimer with protein bS6 to the central domain of the 16S rRNA, where it helps stabilize the platform of the 30S subunit. This Clostridioides difficile (strain 630) (Peptoclostridium difficile) protein is Small ribosomal subunit protein bS18.